Here is a 1681-residue protein sequence, read N- to C-terminus: Y' element ATP-dependent helicase protein 1 copy 2 (1681 aa).

Residues Glu683–Ala860 enclose the Helicase ATP-binding domain. Ala696–Thr703 serves as a coordination point for ATP. The Helicase C-terminal domain occupies Lys917–Gly1066. The segment covering Ala1140 to Ser1283 has biased composition (low complexity). The disordered stretch occupies residues Ala1140–Lys1307. Positions Ala1284 to Lys1307 are enriched in basic and acidic residues.

The protein belongs to the helicase family. Yeast subtelomeric Y' repeat subfamily.

Its function is as follows. Catalyzes DNA unwinding and is involved in telomerase-independent telomere maintenance. In Saccharomyces cerevisiae (strain ATCC 204508 / S288c) (Baker's yeast), this protein is Y' element ATP-dependent helicase protein 1 copy 2 (YRF1-2).